Here is a 363-residue protein sequence, read N- to C-terminus: Neutral protease 2 homolog NFIA_102630 (363 aa).

The first 19 residues, 1–19 (MKVTVLASAILALINGALA), serve as a signal peptide directing secretion. The propeptide occupies 20–172 (LPANAPTLDV…PQAIKLLDRR (153 aa)). 2 disulfides stabilise this stretch: cysteine 178–cysteine 250 and cysteine 257–cysteine 275. Residue histidine 300 coordinates Zn(2+). Glutamate 301 is a catalytic residue. Residues histidine 304 and aspartate 315 each contribute to the Zn(2+) site.

Belongs to the peptidase M35 family. Zn(2+) serves as cofactor.

It localises to the secreted. The catalysed reaction is Preferential cleavage of bonds with hydrophobic residues in P1'. Also 3-Asn-|-Gln-4 and 8-Gly-|-Ser-9 bonds in insulin B chain.. Secreted metalloproteinase that allows assimilation of proteinaceous substrates. Shows high activities on basic nuclear substrates such as histone and protamine. The protein is Neutral protease 2 homolog NFIA_102630 of Neosartorya fischeri (strain ATCC 1020 / DSM 3700 / CBS 544.65 / FGSC A1164 / JCM 1740 / NRRL 181 / WB 181) (Aspergillus fischerianus).